The sequence spans 338 residues: Nicotinate-nucleotide--dimethylbenzimidazole phosphoribosyltransferase (338 aa).

The active-site Proton acceptor is the glutamate 305.

It belongs to the CobT family.

It carries out the reaction 5,6-dimethylbenzimidazole + nicotinate beta-D-ribonucleotide = alpha-ribazole 5'-phosphate + nicotinate + H(+). It participates in nucleoside biosynthesis; alpha-ribazole biosynthesis; alpha-ribazole from 5,6-dimethylbenzimidazole: step 1/2. Functionally, catalyzes the synthesis of alpha-ribazole-5'-phosphate from nicotinate mononucleotide (NAMN) and 5,6-dimethylbenzimidazole (DMB). The protein is Nicotinate-nucleotide--dimethylbenzimidazole phosphoribosyltransferase of Rhizobium leguminosarum bv. trifolii (strain WSM2304).